A 226-amino-acid polypeptide reads, in one-letter code: MSFAESGWRSALRRRGPGTPGPVARPSYSSFTQGDSWGEGEVDEEEGCDQVARDLRAEFSAGAWSEPRKRSVLPPDGNGSPVLPDKRNGIFPAAAGSRAQPRRWPVQVLSILCSLLFAILLAFLLAIAYLIVKELHAENLKNEDDVDTGLLGFWTLLIISLTAGFSCCSFSWTVTYFDSFEPGMFPPTPLSPARFKKLTGHSFHMGYSMAILNGIVAALTVAWCLM.

The tract at residues 1–48 is disordered; that stretch reads MSFAESGWRSALRRRGPGTPGPVARPSYSSFTQGDSWGEGEVDEEEGC. Phosphoserine occurs at positions 2 and 36. Positions 38-48 are enriched in acidic residues; sequence GEGEVDEEEGC. 3 positions are modified to phosphoserine: serine 60, serine 65, and serine 80. The disordered stretch occupies residues 66-85; it reads EPRKRSVLPPDGNGSPVLPD. The next 3 helical transmembrane spans lie at 111 to 131, 150 to 170, and 205 to 225; these read ILCSLLFAILLAFLLAIAYLI, LLGFWTLLIISLTAGFSCCSF, and MGYSMAILNGIVAALTVAWCL.

This sequence belongs to the ARL6IP6 family.

Its subcellular location is the nucleus inner membrane. This is ADP-ribosylation factor-like protein 6-interacting protein 6 (ARL6IP6) from Homo sapiens (Human).